Reading from the N-terminus, the 175-residue chain is Epididymal-specific lipocalin-8 (175 aa).

A signal peptide spans 1–25 (MPGAAEALPTVTVTLVAGAVPPASG). Residues asparagine 66 and asparagine 74 are each glycosylated (N-linked (GlcNAc...) asparagine). An intrachain disulfide couples cysteine 79 to cysteine 166.

Belongs to the calycin superfamily. Lipocalin family.

It localises to the secreted. In terms of biological role, may play a role in male fertility. May act as a retinoid carrier protein within the epididymis. The chain is Epididymal-specific lipocalin-8 (LCN8) from Homo sapiens (Human).